A 201-amino-acid chain; its full sequence is Ribosome maturation factor RimM (201 aa).

The PRC barrel domain maps to 92-166 (DEDEFYHADL…RVVVEPPANF (75 aa)). A disordered region spans residues 169–201 (PAGPQPAEGEEMPDGALEALEGEEAGAGTAPQP).

It belongs to the RimM family. Binds ribosomal protein uS19.

The protein resides in the cytoplasm. In terms of biological role, an accessory protein needed during the final step in the assembly of 30S ribosomal subunit, possibly for assembly of the head region. Essential for efficient processing of 16S rRNA. May be needed both before and after RbfA during the maturation of 16S rRNA. It has affinity for free ribosomal 30S subunits but not for 70S ribosomes. The protein is Ribosome maturation factor RimM of Rhodospirillum centenum (strain ATCC 51521 / SW).